Reading from the N-terminus, the 305-residue chain is UDP-3-O-acyl-N-acetylglucosamine deacetylase (305 aa).

Zn(2+)-binding residues include H78, H237, and D241. Catalysis depends on H264, which acts as the Proton donor.

This sequence belongs to the LpxC family. Requires Zn(2+) as cofactor.

The catalysed reaction is a UDP-3-O-[(3R)-3-hydroxyacyl]-N-acetyl-alpha-D-glucosamine + H2O = a UDP-3-O-[(3R)-3-hydroxyacyl]-alpha-D-glucosamine + acetate. It functions in the pathway glycolipid biosynthesis; lipid IV(A) biosynthesis; lipid IV(A) from (3R)-3-hydroxytetradecanoyl-[acyl-carrier-protein] and UDP-N-acetyl-alpha-D-glucosamine: step 2/6. Its function is as follows. Catalyzes the hydrolysis of UDP-3-O-myristoyl-N-acetylglucosamine to form UDP-3-O-myristoylglucosamine and acetate, the committed step in lipid A biosynthesis. This is UDP-3-O-acyl-N-acetylglucosamine deacetylase from Burkholderia lata (strain ATCC 17760 / DSM 23089 / LMG 22485 / NCIMB 9086 / R18194 / 383).